The sequence spans 209 residues: Large ribosomal subunit protein uL3 (209 aa).

The tract at residues 132–153 (ATHGNSLSHRVPGSIGQNQTPG) is disordered. Residue Gln-150 is modified to N5-methylglutamine.

It belongs to the universal ribosomal protein uL3 family. In terms of assembly, part of the 50S ribosomal subunit. Forms a cluster with proteins L14 and L19. In terms of processing, methylated by PrmB.

Functionally, one of the primary rRNA binding proteins, it binds directly near the 3'-end of the 23S rRNA, where it nucleates assembly of the 50S subunit. The protein is Large ribosomal subunit protein uL3 of Enterobacter sp. (strain 638).